The chain runs to 432 residues: MIKIRRLSSVDDHFQAELDQLLSFEVSVDSEIERTVTQILHQIRTHGDRALLELTRQFDNPDIDRIEEIELPRDEWQSALMSLDKVQREALEQAASRIRAYHEKQLAQSWDYVELDGTRLGQKITALDRVGLYVPGGKAAYPSSVLMNAIPARVAGVRELIMVTPTPKGEKNPLVLAAAAICEVDRVFTIGGAQAVAALAYGTTTVPKVDKIVGPGNAYVAAAKRHVFGTVGIDMLAGPSEILVICDGKTNPDWIAMDLFSQAEHDEQAQSILLCPDKAFLDRVADSISRLIDTLPRRDVIRSSLENRGALIHVRDLEEACMIANRIAPEHLELSVDEPEQWVDSIRHAGAIFLGRYTCEALGDYCAGPNHVLPTSGTARFSSPLGVYDFQKRTSLIQVSAAGASRLGETASILAKGEGLDAHARSAESRYQ.

Residues Tyr133, Gln194, and Asn217 each coordinate NAD(+). Residues Ser240, Gln262, and His265 each contribute to the substrate site. Zn(2+)-binding residues include Gln262 and His265. Residues Glu330 and His331 each act as proton acceptor in the active site. 4 residues coordinate substrate: His331, Asp364, Glu418, and His423. Asp364 provides a ligand contact to Zn(2+). A Zn(2+)-binding site is contributed by His423.

The protein belongs to the histidinol dehydrogenase family. It depends on Zn(2+) as a cofactor.

It carries out the reaction L-histidinol + 2 NAD(+) + H2O = L-histidine + 2 NADH + 3 H(+). It participates in amino-acid biosynthesis; L-histidine biosynthesis; L-histidine from 5-phospho-alpha-D-ribose 1-diphosphate: step 9/9. Catalyzes the sequential NAD-dependent oxidations of L-histidinol to L-histidinaldehyde and then to L-histidine. The polypeptide is Histidinol dehydrogenase (Nitrosomonas europaea (strain ATCC 19718 / CIP 103999 / KCTC 2705 / NBRC 14298)).